The following is a 429-amino-acid chain: Maltoporin 2 (429 aa).

Positions 1 to 25 (MMITLRKLPLAVAVAAGVMSAQALA) are cleaved as a signal peptide. A compositionally biased stretch (polar residues) spans 397-412 (GLQTKDSSGSGAFTSS). The segment at 397–416 (GLQTKDSSGSGAFTSSRGDD) is disordered.

This sequence belongs to the porin LamB (TC 1.B.3) family. Homotrimer formed of three 18-stranded antiparallel beta-barrels, containing three independent channels.

The protein localises to the cell outer membrane. The catalysed reaction is beta-maltose(in) = beta-maltose(out). Involved in the transport of maltose and maltodextrins. This chain is Maltoporin 2, found in Klebsiella pneumoniae subsp. pneumoniae (strain ATCC 700721 / MGH 78578).